A 313-amino-acid polypeptide reads, in one-letter code: tRNA pseudouridine synthase B (313 aa).

The active-site Nucleophile is D46.

Belongs to the pseudouridine synthase TruB family. Type 1 subfamily.

It catalyses the reaction uridine(55) in tRNA = pseudouridine(55) in tRNA. Functionally, responsible for synthesis of pseudouridine from uracil-55 in the psi GC loop of transfer RNAs. The sequence is that of tRNA pseudouridine synthase B from Nitrosospira multiformis (strain ATCC 25196 / NCIMB 11849 / C 71).